The following is a 1005-amino-acid chain: DNA-directed RNA polymerase subunit beta (1005 aa).

Belongs to the RNA polymerase beta chain family. In terms of assembly, in plastids the minimal PEP RNA polymerase catalytic core is composed of four subunits: alpha, beta, beta', and beta''. When a (nuclear-encoded) sigma factor is associated with the core the holoenzyme is formed, which can initiate transcription (Potential).

It is found in the plastid. The protein resides in the apicoplast. The catalysed reaction is RNA(n) + a ribonucleoside 5'-triphosphate = RNA(n+1) + diphosphate. Functionally, DNA-dependent RNA polymerase catalyzes the transcription of DNA into RNA using the four ribonucleoside triphosphates as substrates. This Theileria parva (East coast fever infection agent) protein is DNA-directed RNA polymerase subunit beta (rpoB).